A 1588-amino-acid polypeptide reads, in one-letter code: uncharacterized protein (1588 aa).

Basic and acidic residues predominate over residues 486 to 495 (RKRLTSKTED). 2 disordered regions span residues 486–515 (RKRL…KRRP) and 1146–1176 (GGQD…RELN). Polar residues predominate over residues 498 to 507 (NQWTRDCQNS). The span at 1150 to 1169 (NVSDQSENQSENQSLESETS) shows a compositional bias: low complexity.

The protein resides in the virion. This is an uncharacterized protein from Acanthamoeba polyphaga (Amoeba).